A 185-amino-acid chain; its full sequence is Acireductone dioxygenase (185 aa).

The tract at residues M1 to E23 is disordered. The Fe(2+) site is built by H102, H104, E108, and H146. 4 residues coordinate Ni(2+): H102, H104, E108, and H146.

Belongs to the acireductone dioxygenase (ARD) family. As to quaternary structure, monomer. Fe(2+) serves as cofactor. It depends on Ni(2+) as a cofactor.

It carries out the reaction 1,2-dihydroxy-5-(methylsulfanyl)pent-1-en-3-one + O2 = 3-(methylsulfanyl)propanoate + CO + formate + 2 H(+). It catalyses the reaction 1,2-dihydroxy-5-(methylsulfanyl)pent-1-en-3-one + O2 = 4-methylsulfanyl-2-oxobutanoate + formate + 2 H(+). The protein operates within amino-acid biosynthesis; L-methionine biosynthesis via salvage pathway; L-methionine from S-methyl-5-thio-alpha-D-ribose 1-phosphate: step 5/6. In terms of biological role, catalyzes 2 different reactions between oxygen and the acireductone 1,2-dihydroxy-3-keto-5-methylthiopentene (DHK-MTPene) depending upon the metal bound in the active site. Fe-containing acireductone dioxygenase (Fe-ARD) produces formate and 2-keto-4-methylthiobutyrate (KMTB), the alpha-ketoacid precursor of methionine in the methionine recycle pathway. Ni-containing acireductone dioxygenase (Ni-ARD) produces methylthiopropionate, carbon monoxide and formate, and does not lie on the methionine recycle pathway. The sequence is that of Acireductone dioxygenase from Prochlorococcus marinus (strain MIT 9303).